The following is a 243-amino-acid chain: Adenosylcobinamide-GDP ribazoletransferase (243 aa).

5 consecutive transmembrane segments (helical) span residues 31–51, 61–81, 109–129, 134–154, and 188–208; these read LLWY…AHLL, AAII…DGLA, IAVV…LSLL, GIYL…LLAT, and LLLG…FVWL.

It belongs to the CobS family. Requires Mg(2+) as cofactor.

The protein resides in the cell inner membrane. It carries out the reaction alpha-ribazole + adenosylcob(III)inamide-GDP = adenosylcob(III)alamin + GMP + H(+). It catalyses the reaction alpha-ribazole 5'-phosphate + adenosylcob(III)inamide-GDP = adenosylcob(III)alamin 5'-phosphate + GMP + H(+). It participates in cofactor biosynthesis; adenosylcobalamin biosynthesis; adenosylcobalamin from cob(II)yrinate a,c-diamide: step 7/7. In terms of biological role, joins adenosylcobinamide-GDP and alpha-ribazole to generate adenosylcobalamin (Ado-cobalamin). Also synthesizes adenosylcobalamin 5'-phosphate from adenosylcobinamide-GDP and alpha-ribazole 5'-phosphate. The protein is Adenosylcobinamide-GDP ribazoletransferase of Ectopseudomonas mendocina (strain ymp) (Pseudomonas mendocina).